Consider the following 186-residue polypeptide: HTH-type transcriptional regulator Hpr (186 aa).

An HTH marR-type domain is found at 13–157 (AMLYSQRIAQ…VMAVIRNIYG (145 aa)). Positions 63 to 86 (ISDVAKFGVMHVSTAFNFSKKLEE) form a DNA-binding region, H-T-H motif.

In terms of assembly, homodimer.

Functionally, negative regulator of protease production and sporulation. This chain is HTH-type transcriptional regulator Hpr, found in Lysinibacillus sphaericus (strain C3-41).